The following is a 260-amino-acid chain: 14-3-3-like protein (260 aa).

Residues 240 to 260 form a disordered region; the sequence is DMQDDGGDEIKEAAPKPDEQY. The span at 247–260 shows a compositional bias: basic and acidic residues; the sequence is DEIKEAAPKPDEQY.

The protein belongs to the 14-3-3 family.

The sequence is that of 14-3-3-like protein from Oenothera elata subsp. hookeri (Hooker's evening primrose).